Here is a 194-residue protein sequence, read N- to C-terminus: Molybdenum cofactor guanylyltransferase (194 aa).

GTP-binding positions include 12–14, Lys-25, Asp-71, and Asp-101; that span reads LAG. Asp-101 contacts Mg(2+).

This sequence belongs to the MobA family. As to quaternary structure, monomer. The cofactor is Mg(2+).

The protein resides in the cytoplasm. The enzyme catalyses Mo-molybdopterin + GTP + H(+) = Mo-molybdopterin guanine dinucleotide + diphosphate. Functionally, transfers a GMP moiety from GTP to Mo-molybdopterin (Mo-MPT) cofactor (Moco or molybdenum cofactor) to form Mo-molybdopterin guanine dinucleotide (Mo-MGD) cofactor. In Salmonella typhimurium (strain LT2 / SGSC1412 / ATCC 700720), this protein is Molybdenum cofactor guanylyltransferase.